The chain runs to 385 residues: Acetylornithine aminotransferase (385 aa).

Pyridoxal 5'-phosphate-binding positions include 95–96 and Phe122; that span reads GA. Position 125 (Arg125) interacts with N(2)-acetyl-L-ornithine. Pyridoxal 5'-phosphate is bound at residue 208–211; the sequence is DEIQ. At Lys237 the chain carries N6-(pyridoxal phosphate)lysine. Residue Thr265 coordinates N(2)-acetyl-L-ornithine. Thr266 contacts pyridoxal 5'-phosphate.

Belongs to the class-III pyridoxal-phosphate-dependent aminotransferase family. ArgD subfamily. In terms of assembly, homodimer. It depends on pyridoxal 5'-phosphate as a cofactor.

The protein localises to the cytoplasm. It catalyses the reaction N(2)-acetyl-L-ornithine + 2-oxoglutarate = N-acetyl-L-glutamate 5-semialdehyde + L-glutamate. The protein operates within amino-acid biosynthesis; L-arginine biosynthesis; N(2)-acetyl-L-ornithine from L-glutamate: step 4/4. This Bacillus subtilis (strain 168) protein is Acetylornithine aminotransferase.